Here is a 312-residue protein sequence, read N- to C-terminus: Olfactory receptor 6C2 (312 aa).

The Extracellular portion of the chain corresponds to 1–23; that stretch reads MKNHTVIRTFILLGLTGDPHLQV. Asn3 carries an N-linked (GlcNAc...) asparagine glycan. Residues 24 to 44 traverse the membrane as a helical segment; that stretch reads LLFIFLFLTYMLSVTGNLTII. Topologically, residues 45–52 are cytoplasmic; that stretch reads TLTLVDHH. A helical transmembrane segment spans residues 53–73; it reads LKTPMYFFLRNFSFLEVSFTT. At 74–97 the chain is on the extracellular side; the sequence is VCIPRFLYNISMGDNTITYNACAS. The N-linked (GlcNAc...) asparagine glycan is linked to Asn82. Cys95 and Cys187 form a disulfide bridge. A helical transmembrane segment spans residues 98–118; the sequence is QIFFVILFGATEFFLLAAMSY. Residues 119-137 are Cytoplasmic-facing; the sequence is DRYVAICKPLHYVVIMNNR. A helical membrane pass occupies residues 138-158; that stretch reads VCTLLVLCCWVAGLMIIVPPL. The Extracellular segment spans residues 159–195; the sequence is SLGLQLEFCDSNAIDHFSCDAGPLLKISCSDTWVIEQ. Residues 196-215 traverse the membrane as a helical segment; the sequence is MVILMAVFALIITLVCVILS. Residues 216–235 are Cytoplasmic-facing; the sequence is YLYIVRTILKFPSVQQRKKA. A helical transmembrane segment spans residues 236-256; that stretch reads FSTCSSHMIVVSIAYGSCIFI. The Extracellular segment spans residues 257-269; that stretch reads YIKPSAKDEVAIN. A helical transmembrane segment spans residues 270 to 290; the sequence is KGVSVLTTSVAPLLNPFIYTL. Topologically, residues 291-312 are cytoplasmic; the sequence is RNKQVKQAFSDSIKRIAFLSKK.

It belongs to the G-protein coupled receptor 1 family.

It localises to the cell membrane. In terms of biological role, odorant receptor. The protein is Olfactory receptor 6C2 (OR6C2) of Homo sapiens (Human).